The sequence spans 197 residues: Protein GrpE (197 aa).

The segment covering 1 to 27 (MSNKEQHIEKEEQLQEEKHEEQQKTEE) has biased composition (basic and acidic residues). A disordered region spans residues 1 to 34 (MSNKEQHIEKEEQLQEEKHEEQQKTEETEVEAVN).

Belongs to the GrpE family. In terms of assembly, homodimer.

It localises to the cytoplasm. Functionally, participates actively in the response to hyperosmotic and heat shock by preventing the aggregation of stress-denatured proteins, in association with DnaK and GrpE. It is the nucleotide exchange factor for DnaK and may function as a thermosensor. Unfolded proteins bind initially to DnaJ; upon interaction with the DnaJ-bound protein, DnaK hydrolyzes its bound ATP, resulting in the formation of a stable complex. GrpE releases ADP from DnaK; ATP binding to DnaK triggers the release of the substrate protein, thus completing the reaction cycle. Several rounds of ATP-dependent interactions between DnaJ, DnaK and GrpE are required for fully efficient folding. This is Protein GrpE from Pasteurella multocida (strain Pm70).